The chain runs to 249 residues: Ribosomal RNA small subunit methyltransferase J (249 aa).

Residues 97–98 (RD), 113–114 (ER), and Asp-167 each bind S-adenosyl-L-methionine.

This sequence belongs to the methyltransferase superfamily. RsmJ family.

It is found in the cytoplasm. It catalyses the reaction guanosine(1516) in 16S rRNA + S-adenosyl-L-methionine = N(2)-methylguanosine(1516) in 16S rRNA + S-adenosyl-L-homocysteine + H(+). In terms of biological role, specifically methylates the guanosine in position 1516 of 16S rRNA. The polypeptide is Ribosomal RNA small subunit methyltransferase J (Aeromonas salmonicida (strain A449)).